Here is a 202-residue protein sequence, read N- to C-terminus: Small ribosomal subunit protein uS5 (202 aa).

An S5 DRBM domain is found at 50-113; sequence LKQELLNLNL…REAKLNITPV (64 aa).

Belongs to the universal ribosomal protein uS5 family. In terms of assembly, part of the 30S ribosomal subunit. Contacts protein S4.

Functionally, with S4 and S12 plays an important role in translational accuracy. This chain is Small ribosomal subunit protein uS5, found in Pyrobaculum calidifontis (strain DSM 21063 / JCM 11548 / VA1).